We begin with the raw amino-acid sequence, 854 residues long: Probable disease resistance protein At1g51480 (854 aa).

Residues 25–62 (RNYIHKMEANLDDLHTTMEELKNGRDDLLRRVSIEEDK) are a coiled coil. The NB-ARC domain maps to 138–441 (AHKIPVPKVE…CEGYINPNRY (304 aa)). ATP is bound at residue 180–187 (GMGGVGKT). 6 LRR repeats span residues 514–535 (IVRQ…SKCS), 536–557 (NLST…FFLF), 560–582 (KLVV…ISNL), 584–605 (SLQY…MKKL), 607–629 (KLIY…SATL), and 631–652 (NLQV…MEEL).

It belongs to the disease resistance NB-LRR family.

Functionally, probable disease resistance protein. The protein is Probable disease resistance protein At1g51480 of Arabidopsis thaliana (Mouse-ear cress).